The sequence spans 208 residues: Translation initiation factor 6 (208 aa).

This sequence belongs to the eIF-6 family.

Functionally, binds to the 50S ribosomal subunit and prevents its association with the 30S ribosomal subunit to form the 70S initiation complex. This is Translation initiation factor 6 (eif6) from Nanoarchaeum equitans (strain Kin4-M).